The following is a 159-amino-acid chain: Ribosomal RNA large subunit methyltransferase H (159 aa).

Residues leucine 76, glycine 107, and 126–131 (LSSLTL) contribute to the S-adenosyl-L-methionine site.

This sequence belongs to the RNA methyltransferase RlmH family. Homodimer.

Its subcellular location is the cytoplasm. The enzyme catalyses pseudouridine(1915) in 23S rRNA + S-adenosyl-L-methionine = N(3)-methylpseudouridine(1915) in 23S rRNA + S-adenosyl-L-homocysteine + H(+). Specifically methylates the pseudouridine at position 1915 (m3Psi1915) in 23S rRNA. This chain is Ribosomal RNA large subunit methyltransferase H, found in Cupriavidus necator (strain ATCC 17699 / DSM 428 / KCTC 22496 / NCIMB 10442 / H16 / Stanier 337) (Ralstonia eutropha).